Reading from the N-terminus, the 432-residue chain is 5'-deoxyadenosine deaminase (432 aa).

Zn(2+) contacts are provided by His-63 and His-65. Residues Glu-92 and His-184 each contribute to the substrate site. Residue His-211 participates in Zn(2+) binding. Residues Glu-214 and Asp-299 each contribute to the substrate site. Asp-299 is a binding site for Zn(2+).

Belongs to the metallo-dependent hydrolases superfamily. MTA/SAH deaminase family. Homotetramer. Zn(2+) serves as cofactor.

It carries out the reaction 5'-deoxyadenosine + H2O + H(+) = 5'-deoxyinosine + NH4(+). The catalysed reaction is S-adenosyl-L-homocysteine + H2O + H(+) = S-inosyl-L-homocysteine + NH4(+). The enzyme catalyses S-methyl-5'-thioadenosine + H2O + H(+) = S-methyl-5'-thioinosine + NH4(+). It catalyses the reaction adenosine + H2O + H(+) = inosine + NH4(+). It functions in the pathway amino-acid biosynthesis; S-adenosyl-L-methionine biosynthesis. In terms of biological role, catalyzes the deamination of three SAM-derived enzymatic products, namely 5'-deoxyadenosine, S-adenosyl-L-homocysteine, and 5'-methylthioadenosine, to produce the inosine analogs. Can also deaminate adenosine. The preferred substrate for this enzyme is 5'-deoxyadenosine, but all these substrates are efficiently deaminated. Likely functions in a S-adenosyl-L-methionine (SAM) recycling pathway from S-adenosyl-L-homocysteine (SAH) produced from SAM-dependent methylation reactions. May also be involved in the recycling of 5'-deoxyadenosine, whereupon the 5'-deoxyribose moiety of 5'-deoxyinosine is further metabolized to deoxyhexoses used for the biosynthesis of aromatic amino acids in methanogens. In Methanosarcina barkeri (strain Fusaro / DSM 804), this protein is 5'-deoxyadenosine deaminase.